The chain runs to 478 residues: Keratin, type II cytoskeletal 8 (478 aa).

The head stretch occupies residues 1–97; it reads MSIRVTQKSY…DPNIQAVRTQ (97 aa). Ser-9 carries the phosphoserine; by PKC/PRKCE modification. Lys-11 participates in a covalent cross-link: Glycyl lysine isopeptide (Lys-Gly) (interchain with G-Cter in SUMO2). 4 positions are modified to phosphoserine: Ser-13, Ser-15, Ser-21, and Ser-22. Residues 16-44 form a disordered region; sequence APRSFSSRSYTSGPGSRISSSAFSRVGSS. Position 23 is an omega-N-methylarginine (Arg-23). Position 24 is a phosphoserine; by PKC/PRKCE (Ser-24). Phosphothreonine is present on Thr-26. 2 positions are modified to phosphoserine: Ser-27 and Ser-31. Position 32 is an omega-N-methylarginine (Arg-32). Phosphoserine occurs at positions 34 and 39. An Omega-N-methylarginine modification is found at Arg-40. Phosphoserine occurs at positions 43 and 44. An Asymmetric dimethylarginine; alternate modification is found at Arg-48. At Arg-48 the chain carries Omega-N-methylarginine; alternate. Phosphoserine; by MAPK is present on Ser-81. Residues 98–133 are coil 1A; it reads EKEQIKTLNNKFASFIDKVRHLEQQNKVLETKWNLL. The IF rod domain maps to 98 to 409; it reads EKEQIKTLNN…KLLEGEESRL (312 aa). At Lys-108 the chain carries N6-malonyllysine. Residues Lys-129 and Lys-137 each participate in a glycyl lysine isopeptide (Lys-Gly) (interchain with G-Cter in SUMO2) cross-link. The segment at 134–150 is linker 1; it reads QQQKTARSNIDNMFESY. Residues 151-242 are coil 1B; the sequence is INNLRRQLET…QLYEEEIREM (92 aa). Residue Lys-204 forms a Glycyl lysine isopeptide (Lys-Gly) (interchain with G-Cter in SUMO1); alternate linkage. Lys-204 is covalently cross-linked (Glycyl lysine isopeptide (Lys-Gly) (interchain with G-Cter in SUMO2); alternate). Residue Lys-214 is modified to N6-acetyllysine. Phosphotyrosine is present on Tyr-235. Positions 243–266 are linker 12; that stretch reads QSQISDTSVVLEMDNNRNLDLDGI. The interval 267-405 is coil 2; it reads IAEVKAQYEE…ATYRKLLEGE (139 aa). The interval 268–389 is necessary for interaction with PNN; sequence AEVKAQYEEI…EYQELMNVKL (122 aa). Residue Lys-271 forms a Glycyl lysine isopeptide (Lys-Gly) (interchain with G-Cter in SUMO2) linkage. Position 281 is a phosphoserine (Ser-281). Lys-292 is covalently cross-linked (Glycyl lysine isopeptide (Lys-Gly) (interchain with G-Cter in SUMO2)). Residue Lys-302 forms a Glycyl lysine isopeptide (Lys-Gly) (interchain with G-Cter in SUMO2); alternate linkage. Position 302 is an N6-acetyllysine; alternate (Lys-302). Lys-311 is covalently cross-linked (Glycyl lysine isopeptide (Lys-Gly) (interchain with G-Cter in SUMO2)). A Glycyl lysine isopeptide (Lys-Gly) (interchain with G-Cter in SUMO2); alternate cross-link involves residue Lys-332. Residue Lys-332 is modified to N6-acetyllysine; alternate. A Phosphoserine modification is found at Ser-337. Lys-400 participates in a covalent cross-link: Glycyl lysine isopeptide (Lys-Gly) (interchain with G-Cter in SUMO2). Residues 406 to 478 form a tail region; the sequence is ESRLESGMQN…VSESSDVLSK (73 aa). Phosphoserine occurs at positions 407, 411, 417, 424, and 433. Lys-467 participates in a covalent cross-link: Glycyl lysine isopeptide (Lys-Gly) (interchain with G-Cter in SUMO1); alternate. A Glycyl lysine isopeptide (Lys-Gly) (interchain with G-Cter in SUMO2); alternate cross-link involves residue Lys-467. 4 positions are modified to phosphoserine: Ser-470, Ser-472, Ser-473, and Ser-477.

Belongs to the intermediate filament family. In terms of assembly, heterotetramer of two type I and two type II keratins. Forms a heterodimer with KRT18. Associates with KRT20. Interacts with PNN. When associated with KRT19, interacts with DMD. Interacts with TCHP. Interacts with APEX1. Interacts with GPER1. Interacts with EPPK1. Interacts with PKP1 and PKP2. In terms of processing, O-glycosylated. O-GlcNAcylation at multiple sites increases solubility, and decreases stability by inducing proteasomal degradation. O-glycosylated (O-GlcNAcylated), in a cell cycle-dependent manner. Expressed in bladder, liver, exocervix and (in very low amounts) esophagus.

It localises to the cytoplasm. The protein localises to the nucleus. It is found in the nucleoplasm. The protein resides in the nucleus matrix. Its function is as follows. Together with KRT19, helps to link the contractile apparatus to dystrophin at the costameres of striated muscle. This is Keratin, type II cytoskeletal 8 (KRT8) from Bos taurus (Bovine).